The following is a 952-amino-acid chain: Disintegrin and metalloproteinase domain-containing protein adm-2 (952 aa).

Over 1-672 (MTDTLDLKLS…NEAYRFRGIT (672 aa)) the chain is Extracellular. Asn125 and Asn301 each carry an N-linked (GlcNAc...) asparagine glycan. The Peptidase M12B domain occupies 177–373 (RFVELALVAD…GIDLCLFNEP (197 aa)). Intrachain disulfides connect Cys287–Cys368, Cys330–Cys352, and Cys332–Cys337. His312 is a binding site for Zn(2+). Glu313 is an active-site residue. Zn(2+) contacts are provided by His316 and His322. In terms of domain architecture, Disintegrin spans 379 to 466 (DAKCGNGIVE…DCPADFFVQN (88 aa)). Asn406 is a glycosylation site (N-linked (GlcNAc...) asparagine). Cystine bridges form between Cys438-Cys458, Cys624-Cys634, Cys628-Cys640, and Cys642-Cys651. Residues 620-652 (VTAQCLDNCNFRGVCNNVGNCHCERGFGGIACE) form the EGF-like domain. A helical membrane pass occupies residues 673-693 (LSSTFLVFFCLFGIFIGGLCV). Over 694–952 (YYRVKRKRNL…AAIFDQKLKK (259 aa)) the chain is Cytoplasmic. Disordered stretches follow at residues 778 to 809 (IPMVTLKNPNLASPTPLLNPAEKEEQNQERAT) and 829 to 938 (SFNT…EKVD). 2 stretches are compositionally biased toward basic and acidic residues: residues 798-809 (AEKEEQNQERAT) and 849-873 (PSDDVLSKLNEDLAKEKNAKFDRLN). Over residues 905 to 914 (QAPPPPPPAH) the composition is skewed to pro residues. Residues 925-938 (KVSEDAAATEEKVD) show a composition bias toward basic and acidic residues.

Requires Zn(2+) as cofactor. In terms of tissue distribution, expressed in hyp7 large epidermal syncytium (punctate distribution), seam cell syncytia, anterior epidermis, neurons located in the head, tail and central body, proximal oogenic cells (levels increasing in maturing oocytes) and myoepithelial cells of the spermatheca (at protein level). Not detected in mature sperm cells.

The protein localises to the cell membrane. It localises to the endosome membrane. It is found in the lysosome membrane. Metalloprotease that cleaves and releases a number of molecules. Negative regulator of lrp-1 protein levels, potentially by influencing its endosomal trafficking. Involved in regulating the molting process. This is Disintegrin and metalloproteinase domain-containing protein adm-2 from Caenorhabditis elegans.